Here is a 444-residue protein sequence, read N- to C-terminus: Acyl-CoA 6-desaturase (444 aa).

Residues 1 to 21 are disordered; the sequence is MGKGGNQGEGSTERQAPMPTF. Over 1-130 the chain is Cytoplasmic; that stretch reads MGKGGNQGEG…EDMNLFKTNH (130 aa). In terms of domain architecture, Cytochrome b5 heme-binding spans 18–95; sequence MPTFRWEEIQ…LKPLLIGELA (78 aa). The helical transmembrane segment at 131–151 threads the bilayer; that stretch reads LFFFLLLSHIIVMESLAWFIL. A topological domain (lumenal) is located at residue S152. A helical membrane pass occupies residues 153–173; the sequence is YFGTGWIPTLVTAFVLATSQA. Over 174–264 the chain is Cytoplasmic; it reads QAGWLQHDYG…KYLPYNHQHE (91 aa). The Histidine box-1 signature appears at 180 to 184; it reads HDYGH. Positions 217 to 221 match the Histidine box-2 motif; sequence HFQHH. The chain crosses the membrane as a helical span at residues 265–285; that stretch reads YFFLIGPPLLIPMYFQYQIIM. At 286–305 the chain is on the lumenal side; sequence TMISRRDWVDLAWAISYYMR. The chain crosses the membrane as a helical span at residues 306–326; the sequence is FFYTYIPFYGILGALVFLNFI. At 327-444 the chain is on the cytoplasmic side; sequence RFLESHWFVW…ELWLDAYLHK (118 aa). Positions 382 to 386 match the Histidine box-3 motif; it reads QIEHH.

Belongs to the fatty acid desaturase type 1 family. In terms of tissue distribution, highly expressed in the adrenal gland, liver, brain, and testis, tissues where lipogenesis and steroidogenesis are active. Also detected in lung, heart, and skeletal muscle.

Its subcellular location is the endoplasmic reticulum membrane. The enzyme catalyses (9Z,12Z)-octadecadienoyl-CoA + 2 Fe(II)-[cytochrome b5] + O2 + 2 H(+) = (6Z,9Z,12Z)-octadecatrienoyl-CoA + 2 Fe(III)-[cytochrome b5] + 2 H2O. It carries out the reaction (9Z,12Z,15Z)-octadecatrienoyl-CoA + 2 Fe(II)-[cytochrome b5] + O2 + 2 H(+) = (6Z,9Z,12Z,15Z)-octadecatetraenoyl-CoA + 2 Fe(III)-[cytochrome b5] + 2 H2O. The catalysed reaction is (9Z,12Z,15Z,18Z,21Z)-tetracosapentaenoyl-CoA + 2 Fe(II)-[cytochrome b5] + O2 + 2 H(+) = (6Z,9Z,12Z,15Z,18Z,21Z)-tetracosahexaenoyl-CoA + 2 Fe(III)-[cytochrome b5] + 2 H2O. It catalyses the reaction (11E)-octadecenoyl-CoA + 2 Fe(II)-[cytochrome b5] + O2 + 2 H(+) = (6Z,11E)-octadecadienoyl-CoA + 2 Fe(III)-[cytochrome b5] + 2 H2O. The enzyme catalyses (11Z,14Z)-eicosadienoyl-CoA + 2 Fe(II)-[cytochrome b5] + O2 + 2 H(+) = (8Z,11Z,14Z)-eicosatrienoyl-CoA + 2 Fe(III)-[cytochrome b5] + 2 H2O. It carries out the reaction (11Z,14Z,17Z)-eicosatrienoyl-CoA + 2 Fe(II)-[cytochrome b5] + O2 + 2 H(+) = (8Z,11Z,14Z,17Z)-eicosatetraenoyl-CoA + 2 Fe(III)-[cytochrome b5] + 2 H2O. Its pathway is lipid metabolism; polyunsaturated fatty acid biosynthesis. Its function is as follows. Involved in the biosynthesis of highly unsaturated fatty acids (HUFA) from the essential polyunsaturated fatty acids (PUFA) linoleic acid (LA) (18:2n-6) and alpha-linolenic acid (ALA) (18:3n-3) precursors, acting as a fatty acyl-coenzyme A (CoA) desaturase that introduces a cis double bond at carbon 6 of the fatty acyl chain. Catalyzes the first and rate limiting step in this pathway which is the desaturation of LA (18:2n-6) and ALA (18:3n-3) into gamma-linoleate (GLA) (18:3n-6) and stearidonate (18:4n-3), respectively. Subsequently, in the biosynthetic pathway of HUFA n-3 series, it desaturates tetracosapentaenoate (24:5n-3) to tetracosahexaenoate (24:6n-3), which is then converted to docosahexaenoate (DHA)(22:6n-3), an important lipid for nervous system function. It can also desaturate (11E)-octadecenoate (trans-vaccenoate) at carbon 6 generating (6Z,11E)-octadecadienoate. In addition to Delta-6 activity, this enzyme exhibits Delta-8 activity with slight biases toward n-3 fatty acyl-CoA substrates. This chain is Acyl-CoA 6-desaturase, found in Mus musculus (Mouse).